Here is a 2443-residue protein sequence, read N- to C-terminus: Spatacsin (2443 aa).

Phosphoserine is present on Ser-1955.

As to quaternary structure, interacts with AP5Z1, AP5B1, AP5S1 and ZFYVE26. As to expression, expressed in all structures of brain, with a high expression in cerebellum. Expressed in cortical projection neurons.

Its subcellular location is the cytoplasm. The protein localises to the cytosol. The protein resides in the nucleus. It is found in the cell projection. It localises to the axon. Its subcellular location is the dendrite. Functionally, may play a role in neurite plasticity by maintaining cytoskeleton stability and regulating synaptic vesicle transport. This chain is Spatacsin (SPG11), found in Homo sapiens (Human).